We begin with the raw amino-acid sequence, 264 residues long: 5'-nucleotidase SurE (264 aa).

The a divalent metal cation site is built by Asp12, Asp13, Ser43, and Asn98.

The protein belongs to the SurE nucleotidase family. It depends on a divalent metal cation as a cofactor.

It is found in the cytoplasm. The enzyme catalyses a ribonucleoside 5'-phosphate + H2O = a ribonucleoside + phosphate. Its function is as follows. Nucleotidase that shows phosphatase activity on nucleoside 5'-monophosphates. In Sulfurovum sp. (strain NBC37-1), this protein is 5'-nucleotidase SurE.